The sequence spans 239 residues: DNA repair protein RecO (239 aa).

Belongs to the RecO family.

Involved in DNA repair and RecF pathway recombination. This is DNA repair protein RecO from Aromatoleum aromaticum (strain DSM 19018 / LMG 30748 / EbN1) (Azoarcus sp. (strain EbN1)).